The following is a 192-amino-acid chain: GTP cyclohydrolase-2 (192 aa).

Residue 50–54 (RLHSE) participates in GTP binding. Positions 55, 66, and 68 each coordinate Zn(2+). Residues 92 to 94 (EGR) and Thr-114 each bind GTP. Asp-126 acts as the Proton acceptor in catalysis. Catalysis depends on Arg-128, which acts as the Nucleophile. Residues Thr-149 and Lys-154 each coordinate GTP.

The protein belongs to the GTP cyclohydrolase II family. The cofactor is Zn(2+).

It catalyses the reaction GTP + 4 H2O = 2,5-diamino-6-hydroxy-4-(5-phosphoribosylamino)-pyrimidine + formate + 2 phosphate + 3 H(+). The protein operates within cofactor biosynthesis; riboflavin biosynthesis; 5-amino-6-(D-ribitylamino)uracil from GTP: step 1/4. In terms of biological role, catalyzes the conversion of GTP to 2,5-diamino-6-ribosylamino-4(3H)-pyrimidinone 5'-phosphate (DARP), formate and pyrophosphate. The polypeptide is GTP cyclohydrolase-2 (Helicobacter pylori (strain Shi470)).